The chain runs to 397 residues: Acetate kinase 2 (397 aa).

Asparagine 8 is a Mg(2+) binding site. Position 15 (lysine 15) interacts with ATP. Arginine 89 is a binding site for substrate. Aspartate 146 acts as the Proton donor/acceptor in catalysis. ATP contacts are provided by residues histidine 206–glycine 210, aspartate 281–arginine 283, and glycine 329–asparagine 333. Glutamate 380 lines the Mg(2+) pocket.

This sequence belongs to the acetokinase family. As to quaternary structure, homodimer. Requires Mg(2+) as cofactor. The cofactor is Mn(2+).

The protein localises to the cytoplasm. The catalysed reaction is acetate + ATP = acetyl phosphate + ADP. Its pathway is metabolic intermediate biosynthesis; acetyl-CoA biosynthesis; acetyl-CoA from acetate: step 1/2. In terms of biological role, catalyzes the formation of acetyl phosphate from acetate and ATP. Can also catalyze the reverse reaction. The polypeptide is Acetate kinase 2 (Listeria monocytogenes serovar 1/2a (strain ATCC BAA-679 / EGD-e)).